The primary structure comprises 292 residues: Polyisoprenoid diphosphate/phosphate phosphohydrolase PLPP6 (292 aa).

2 disordered regions span residues 1 to 34 (MPSP…SGGG) and 66 to 86 (GSFP…PPED). Over 1-131 (MPSPRRTIEG…SAWGSVRPLM (131 aa)) the chain is Cytoplasmic. A compositionally biased stretch (low complexity) spans 10–25 (GRPLGSSGGSSVPGSP). Phosphoserine is present on residues S24 and S67. Residues 69-79 (PLAASGPAQAA) show a composition bias toward low complexity. The chain crosses the membrane as a helical span at residues 132-152 (KLLEISGHGIPWLLGTLYCLL). At 153–161 (RSDSWAGRE) the chain is on the lumenal side. A helical transmembrane segment spans residues 162 to 182 (VLMNLLFALLLDLLLVAVIKG). The segment at 181–189 (KGLVRRRRP) is phosphatase sequence motif I. Residues 183-225 (LVRRRRPAHNQKDMFFTLSVDRYSFPSGHATRAALVSRFILNH) lie on the Cytoplasmic side of the membrane. A phosphatase sequence motif II region spans residues 208 to 211 (PSGH). The Proton donors role is filled by H211. Residues 226–246 (LVLAIPLRVLVVLWAFVLGLS) traverse the membrane as a helical segment. The tract at residues 246 to 257 (SRVMLGRHNVTD) is phosphatase sequence motif III. Residues 247–257 (RVMLGRHNVTD) lie on the Lumenal side of the membrane. The active-site Nucleophile is the H253. The chain crosses the membrane as a helical span at residues 258–278 (VAFGFFLGYMQYSIVDYCWLS). Topologically, residues 279–292 (PHNVPVLFVLWNQQ) are cytoplasmic.

The protein belongs to the PA-phosphatase related phosphoesterase family. Post-translationally, phosphorylation by PKC activates the phosphatase activity towards presqualene diphosphate.

Its subcellular location is the endoplasmic reticulum membrane. The protein resides in the nucleus envelope. It is found in the nucleus inner membrane. The catalysed reaction is presqualene diphosphate + H2O = presqualene phosphate + phosphate + H(+). It carries out the reaction presqualene phosphate + H2O = presqualene alcohol + phosphate. It catalyses the reaction (2E,6E)-farnesyl diphosphate + H2O = (2E,6E)-farnesyl phosphate + phosphate + H(+). The enzyme catalyses (2E,6E)-farnesyl phosphate + H2O = (2E,6E)-farnesol + phosphate. The catalysed reaction is (2E,6E,10E)-geranylgeranyl diphosphate + H2O = (2E,6E,10E)-geranylgeranyl phosphate + phosphate + H(+). It carries out the reaction (2E,6E,10E)-geranylgeranyl phosphate + H2O = (2E,6E,10E)-geranylgeraniol + phosphate. It catalyses the reaction (2E)-geranyl diphosphate + H2O = (2E)-geranyl phosphate + phosphate + H(+). The enzyme catalyses (2E)-geranyl phosphate + H2O = (2E)-geraniol + phosphate. The catalysed reaction is 1,2-dihexadecanoyl-sn-glycero-3-phosphate + H2O = 1,2-dihexadecanoyl-sn-glycerol + phosphate. Its function is as follows. Magnesium-independent polyisoprenoid diphosphatase that catalyzes the sequential dephosphorylation of presqualene, farnesyl, geranyl and geranylgeranyl diphosphates. Functions in the innate immune response through the dephosphorylation of presqualene diphosphate which acts as a potent inhibitor of the signaling pathways contributing to polymorphonuclear neutrophils activation. May regulate the biosynthesis of cholesterol and related sterols by dephosphorylating presqualene and farnesyl diphosphate, two key intermediates in this biosynthetic pathway. May also play a role in protein prenylation by acting on farnesyl diphosphate and its derivative geranylgeranyl diphosphate, two precursors for the addition of isoprenoid anchors to membrane proteins. Has a lower activity towards phosphatidic acid (PA), but through phosphatidic acid dephosphorylation may participate in the biosynthesis of phospholipids and triacylglycerols. May also act on ceramide-1-P, lysophosphatidic acid (LPA) and sphing-4-enine 1-phosphate/sphingosine-1-phosphate. The chain is Polyisoprenoid diphosphate/phosphate phosphohydrolase PLPP6 from Mus musculus (Mouse).